Here is a 193-residue protein sequence, read N- to C-terminus: Acyl carrier protein phosphodiesterase (193 aa).

Belongs to the AcpH family.

The enzyme catalyses holo-[ACP] + H2O = apo-[ACP] + (R)-4'-phosphopantetheine + H(+). Functionally, converts holo-ACP to apo-ACP by hydrolytic cleavage of the phosphopantetheine prosthetic group from ACP. This Escherichia coli O127:H6 (strain E2348/69 / EPEC) protein is Acyl carrier protein phosphodiesterase.